Consider the following 151-residue polypeptide: Class I hydrophobin A (151 aa).

An N-terminal signal peptide occupies residues 1–17; it reads MQFSVAAVLALATAVAA. Disulfide bonds link Cys-52-Cys-125, Cys-60-Cys-119, Cys-61-Cys-101, and Cys-126-Cys-144.

It belongs to the fungal hydrophobin family. Interacts with cutinase cutL1 in a pH-dependent manner. Self-assembles to form functional amyloid fibrils called rodlets. Self-assembly into fibrillar rodlets occurs spontaneously at hydrophobic:hydrophilic interfaces and the rodlets further associate laterally to form amphipathic monolayers. rolA rodlet formation is regulated by the strength of ionic interactions between rolA molecules. Three types of self-assembled structures of rolA are observed: spherical, rod-like, and mesh-like.

The protein localises to the secreted. It is found in the cell wall. Functionally, aerial growth, conidiation, and dispersal of filamentous fungi in the environment rely upon a capability of their secreting small amphipathic proteins called hydrophobins (HPBs) with low sequence identity. Class I can self-assemble into an outermost layer of rodlet bundles on aerial cell surfaces, conferring cellular hydrophobicity that supports fungal growth, development and dispersal; whereas Class II form highly ordered films at water-air interfaces through intermolecular interactions but contribute nothing to the rodlet structure. RolA is a class I hydrophobin that undergoes a conformational change after its adsorption to hydrophobic surfaces such as the biodegradable polyester polybutylene succinate-coadipate (PBSA) and recruits the cutinase cutL1, resulting in condensation of cutL1 on the PBSA surface and consequent stimulation of PBSA hydrolysis. Increases also the activity of polyethylene terephthalate hydrolase (PETase) that hydrolyzes polyethylene terephthalate (PET), one of the most well-known polyesters that is widely used as packaging material, when the PET samples are preincubated with the hydrophobin. The wetting effect of rolA probably acts on PET surface to become hydrophilic, which leads PETase easier to contact and attack the surface. The sequence is that of Class I hydrophobin A from Aspergillus oryzae (strain ATCC 42149 / RIB 40) (Yellow koji mold).